A 630-amino-acid polypeptide reads, in one-letter code: Betaine/ectoine transporter LcoP (630 aa).

Residues 1-13 are compositionally biased toward polar residues; sequence MSTNSGNNLPESQ. The tract at residues 1–28 is disordered; sequence MSTNSGNNLPESQESPEEPHYPHDTHPG. A compositionally biased stretch (basic and acidic residues) spans 17 to 26; it reads EEPHYPHDTH. A run of 12 helical transmembrane segments spans residues 47-67, 85-105, 125-145, 177-197, 230-250, 267-287, 299-319, 354-374, 385-405, 436-456, 479-499, and 510-530; these read TVFG…ISSP, TGWL…YIAF, FSWI…FFGP, FHWG…LAYS, MAII…AIQV, ILIA…VSGV, ISLT…LFLL, WTAF…MFIA, FALI…TIFG, LPLY…FFVT, LIVV…LLTG, and LTIL…IAFI. The segment at 611-630 is disordered; the sequence is WADGWTPESTEEGEVDAKKD.

Belongs to the BCCT transporter (TC 2.A.15) family.

It is found in the cell membrane. Uptake is activated by hyperosmotic stress. Shows a small but significant chill stimulation around 15 degrees Celsius. Its function is as follows. Involved in the uptake of osmoprotectants. Can transport betaine and ectoine. Na(+) is probably the coupling ion. The polypeptide is Betaine/ectoine transporter LcoP (Corynebacterium glutamicum (strain ATCC 13032 / DSM 20300 / JCM 1318 / BCRC 11384 / CCUG 27702 / LMG 3730 / NBRC 12168 / NCIMB 10025 / NRRL B-2784 / 534)).